Here is a 214-residue protein sequence, read N- to C-terminus: ATP-dependent dethiobiotin synthetase BioD (214 aa).

10–15 (GIGKTY) lines the ATP pocket. Thr14 is a binding site for Mg(2+). The active site involves Lys35. Thr39 is a binding site for substrate. Residues Asp44, 109-112 (EGAG), and 169-170 (NC) contribute to the ATP site. Residues Asp44 and Glu109 each contribute to the Mg(2+) site.

The protein belongs to the dethiobiotin synthetase family. In terms of assembly, homodimer. Mg(2+) is required as a cofactor.

It is found in the cytoplasm. It carries out the reaction (7R,8S)-7,8-diammoniononanoate + CO2 + ATP = (4R,5S)-dethiobiotin + ADP + phosphate + 3 H(+). It functions in the pathway cofactor biosynthesis; biotin biosynthesis; biotin from 7,8-diaminononanoate: step 1/2. Catalyzes a mechanistically unusual reaction, the ATP-dependent insertion of CO2 between the N7 and N8 nitrogen atoms of 7,8-diaminopelargonic acid (DAPA, also called 7,8-diammoniononanoate) to form a ureido ring. This is ATP-dependent dethiobiotin synthetase BioD from Methanocaldococcus jannaschii (strain ATCC 43067 / DSM 2661 / JAL-1 / JCM 10045 / NBRC 100440) (Methanococcus jannaschii).